The following is a 447-amino-acid chain: GTPase Der (447 aa).

2 EngA-type G domains span residues 3-167 and 181-354; these read PVIA…FAER and TRIA…AAAM. GTP contacts are provided by residues 9-16, 56-60, 119-122, 187-194, 234-238, and 299-302; these read GRPNVGKS, DTGGF, NKAE, DTAGL, and NKWD. One can recognise a KH-like domain in the interval 355–439; that stretch reads VKLPTPKLTR…PLRIEFRTNK (85 aa).

This sequence belongs to the TRAFAC class TrmE-Era-EngA-EngB-Septin-like GTPase superfamily. EngA (Der) GTPase family. Associates with the 50S ribosomal subunit.

Functionally, GTPase that plays an essential role in the late steps of ribosome biogenesis. The protein is GTPase Der of Ralstonia pickettii (strain 12J).